The primary structure comprises 185 residues: Translocon-associated protein subunit gamma (185 aa).

At Met-1 the chain carries N-acetylmethionine. Residues 1-27 (MAPKGSSKQQSEEDLLLQDFSRNLSAK) lie on the Lumenal side of the membrane. A phosphoserine mark is found at Ser-7 and Ser-11. Residues 28–48 (SSALFFGNAFIVSAIPIWLYW) traverse the membrane as a helical segment. Residues 49-54 (RIWHMD) are Cytoplasmic-facing. Residues 55-76 (LIQSAVLYSVMTLVSTYLVAFA) traverse the membrane as a helical segment. The Lumenal segment spans residues 77-135 (YKNVKFVLKHKVAQKREDAVSKEVTRKLSEADNRKMSRKEKDERILWKKNEVADYEATT). Ser-105 bears the Phosphoserine mark. A helical transmembrane segment spans residues 136-157 (FSIFYNNTLFLVVVIVASFFIL). At 158-163 (KNFNPT) the chain is on the cytoplasmic side. The helical transmembrane segment at 164 to 184 (VNYILSISASSGLIALLSTGS) threads the bilayer.

Belongs to the TRAP-gamma family. As to quaternary structure, heterotetramer of TRAP-alpha, TRAP-beta, TRAP-delta and TRAP-gamma.

It is found in the endoplasmic reticulum membrane. Its function is as follows. TRAP proteins are part of a complex whose function is to bind calcium to the ER membrane and thereby regulate the retention of ER resident proteins. The polypeptide is Translocon-associated protein subunit gamma (SSR3) (Homo sapiens (Human)).